Here is a 425-residue protein sequence, read N- to C-terminus: Dihydroorotase (425 aa).

Residues H61 and H63 each contribute to the Zn(2+) site. Substrate is bound by residues 63 to 65 and N95; that span reads HLR. Zn(2+) contacts are provided by D153, H180, and H233. N279 is a substrate binding site. D306 is a Zn(2+) binding site. D306 is an active-site residue. H310 is a substrate binding site.

The protein belongs to the metallo-dependent hydrolases superfamily. DHOase family. Class I DHOase subfamily. The cofactor is Zn(2+).

The catalysed reaction is (S)-dihydroorotate + H2O = N-carbamoyl-L-aspartate + H(+). Its pathway is pyrimidine metabolism; UMP biosynthesis via de novo pathway; (S)-dihydroorotate from bicarbonate: step 3/3. Catalyzes the reversible cyclization of carbamoyl aspartate to dihydroorotate. The chain is Dihydroorotase from Geobacter sulfurreducens (strain ATCC 51573 / DSM 12127 / PCA).